Consider the following 181-residue polypeptide: Segregation and condensation protein B (181 aa).

Belongs to the ScpB family. As to quaternary structure, homodimer. Homodimerization may be required to stabilize the binding of ScpA to the Smc head domains. Component of a cohesin-like complex composed of ScpA, ScpB and the Smc homodimer, in which ScpA and ScpB bind to the head domain of Smc. The presence of the three proteins is required for the association of the complex with DNA.

The protein localises to the cytoplasm. In terms of biological role, participates in chromosomal partition during cell division. May act via the formation of a condensin-like complex containing Smc and ScpA that pull DNA away from mid-cell into both cell halves. This is Segregation and condensation protein B from Desulforamulus reducens (strain ATCC BAA-1160 / DSM 100696 / MI-1) (Desulfotomaculum reducens).